A 363-amino-acid polypeptide reads, in one-letter code: Ribonuclease P protein subunit p40 (363 aa).

Component of nuclear RNase P and RNase MRP ribonucleoproteins. RNase P consists of a catalytic RNA moiety and about 10 protein subunits; POP1, POP4, POP5, POP7, RPP14, RPP21, RPP25, RPP30, RPP38 and RPP40. Within the RNase P complex, POP1, POP7 and RPP25 form the 'finger' subcomplex, POP5, RPP14, RPP40 and homodimeric RPP30 form the 'palm' subcomplex, and RPP21, POP4 and RPP38 form the 'wrist' subcomplex. All subunits of the RNase P complex interact with the catalytic RNA. Several subunits of RNase P are also part of the RNase MRP complex. RNase MRP consists of a catalytic RNA moiety and about 8 protein subunits; POP1, POP7, RPP25, RPP30, RPP38, RPP40 and possibly also POP4 and POP5.

It is found in the nucleus. It localises to the nucleolus. Its function is as follows. Component of ribonuclease P, a ribonucleoprotein complex that generates mature tRNA molecules by cleaving their 5'-ends. Also a component of the MRP ribonuclease complex, which cleaves pre-rRNA sequences. This Mus musculus (Mouse) protein is Ribonuclease P protein subunit p40 (Rpp40).